The primary structure comprises 362 residues: Mitochondrial glycine transporter (362 aa).

3 Solcar repeats span residues 22–108, 132–236, and 269–354; these read PDAT…MRTS, LTAM…FKND, and RSSI…LIKS. A run of 6 helical transmembrane segments spans residues 28–53, 83–109, 138–163, 211–234, 273–299, and 329–347; these read LLAG…TRLQ, GTLP…RTSW, LTTG…TRFE, GSVA…EAFK, INST…KTRL, and GLSL…SWCI.

The protein belongs to the mitochondrial carrier (TC 2.A.29) family. SLC25A38 subfamily.

It localises to the mitochondrion inner membrane. The catalysed reaction is glycine(in) = glycine(out). Mitochondrial glycine transporter that imports glycine into the mitochondrial matrix. Plays an important role in providing glycine for the first enzymatic step in heme biosynthesis, the condensation of glycine with succinyl-CoA to produce 5-aminolevulinate (ALA) in the mitochondrial matrix. The protein is Mitochondrial glycine transporter of Candida albicans (strain SC5314 / ATCC MYA-2876) (Yeast).